Reading from the N-terminus, the 215-residue chain is Imidazole glycerol phosphate synthase subunit HisH (215 aa).

Residues T7–P215 enclose the Glutamine amidotransferase type-1 domain. The Nucleophile role is filled by C86. Catalysis depends on residues H195 and E197.

In terms of assembly, heterodimer of HisH and HisF.

The protein resides in the cytoplasm. The catalysed reaction is 5-[(5-phospho-1-deoxy-D-ribulos-1-ylimino)methylamino]-1-(5-phospho-beta-D-ribosyl)imidazole-4-carboxamide + L-glutamine = D-erythro-1-(imidazol-4-yl)glycerol 3-phosphate + 5-amino-1-(5-phospho-beta-D-ribosyl)imidazole-4-carboxamide + L-glutamate + H(+). The enzyme catalyses L-glutamine + H2O = L-glutamate + NH4(+). Its pathway is amino-acid biosynthesis; L-histidine biosynthesis; L-histidine from 5-phospho-alpha-D-ribose 1-diphosphate: step 5/9. Functionally, IGPS catalyzes the conversion of PRFAR and glutamine to IGP, AICAR and glutamate. The HisH subunit catalyzes the hydrolysis of glutamine to glutamate and ammonia as part of the synthesis of IGP and AICAR. The resulting ammonia molecule is channeled to the active site of HisF. The polypeptide is Imidazole glycerol phosphate synthase subunit HisH (Dechloromonas aromatica (strain RCB)).